We begin with the raw amino-acid sequence, 244 residues long: Securin-like protein (244 aa).

Positions 31 to 53 (ELEKTPSRGGLGLVVNSSKTPGG) are disordered.

Forms a complex (via C-terminus) with separase sep-1. Interaction with ify-1 stabilizes sep-1. Also maintains the complex in the cytoplasm during interphase and recruits it to chromosomes during the first meiotic division. Interacts with E3 ubiquitin-protein ligase etc-1. Ubiquitinated by etc-1 likely at the onset of anaphase, resulting in its degradation. Expressed in germ cells including oocytes.

The protein localises to the cytoplasm. It is found in the chromosome. The protein resides in the cytoskeleton. Its subcellular location is the spindle. Its function is as follows. Acts as a chaperone and as an inhibitor for separase sep-1. Plays an essential role in maintaining chromosome cohesion prior to meiotic and mitotic anaphase, in cytokinesis and in organizing the spindle and the centrosome. Ubiquitination-dependent degradation at the onset of anaphase is likely to activate sep-1 resulting in the proteolysis of the cohesin complex and the subsequent segregation of the chromosomes. Also required for cortical granule exocytosis. The polypeptide is Securin-like protein (Caenorhabditis elegans).